A 373-amino-acid chain; its full sequence is Glutamate 5-kinase (373 aa).

An ATP-binding site is contributed by K15. S55, D142, and N154 together coordinate substrate. Residues 174-175 and 216-222 each bind ATP; these read TD and TGGMATK. A PUA domain is found at 281–359; it reads AGRIIVDDGA…SRIEAILGYR (79 aa).

This sequence belongs to the glutamate 5-kinase family.

It localises to the cytoplasm. It catalyses the reaction L-glutamate + ATP = L-glutamyl 5-phosphate + ADP. The protein operates within amino-acid biosynthesis; L-proline biosynthesis; L-glutamate 5-semialdehyde from L-glutamate: step 1/2. Functionally, catalyzes the transfer of a phosphate group to glutamate to form L-glutamate 5-phosphate. The chain is Glutamate 5-kinase from Pelobacter propionicus (strain DSM 2379 / NBRC 103807 / OttBd1).